Here is a 397-residue protein sequence, read N- to C-terminus: Enoyl-[acyl-carrier-protein] reductase [NADH] (397 aa).

Residues 48 to 53 (GASTGY), 74 to 75 (FE), 111 to 112 (DA), and 139 to 140 (VA) each bind NAD(+). Y225 contributes to the substrate binding site. The Proton donor role is filled by Y235. NAD(+)-binding positions include K244 and 273–275 (VVT).

It belongs to the TER reductase family. As to quaternary structure, monomer.

It carries out the reaction a 2,3-saturated acyl-[ACP] + NAD(+) = a (2E)-enoyl-[ACP] + NADH + H(+). It participates in lipid metabolism; fatty acid biosynthesis. Involved in the final reduction of the elongation cycle of fatty acid synthesis (FAS II). Catalyzes the reduction of a carbon-carbon double bond in an enoyl moiety that is covalently linked to an acyl carrier protein (ACP). In Burkholderia pseudomallei (strain K96243), this protein is Enoyl-[acyl-carrier-protein] reductase [NADH].